A 436-amino-acid chain; its full sequence is 3-ketoacyl-CoA thiolase (436 aa).

Catalysis depends on C99, which acts as the Acyl-thioester intermediate. Catalysis depends on proton acceptor residues H392 and C422.

Belongs to the thiolase-like superfamily. Thiolase family. In terms of assembly, heterotetramer of two alpha chains (FadJ) and two beta chains (FadI).

It localises to the cytoplasm. It catalyses the reaction an acyl-CoA + acetyl-CoA = a 3-oxoacyl-CoA + CoA. It participates in lipid metabolism; fatty acid beta-oxidation. In terms of biological role, catalyzes the final step of fatty acid oxidation in which acetyl-CoA is released and the CoA ester of a fatty acid two carbons shorter is formed. The polypeptide is 3-ketoacyl-CoA thiolase (Shigella boydii serotype 4 (strain Sb227)).